Consider the following 297-residue polypeptide: Formamidopyrimidine-DNA glycosylase (297 aa).

Pro-2 acts as the Schiff-base intermediate with DNA in catalysis. Glu-3 serves as the catalytic Proton donor. Lys-58 serves as the catalytic Proton donor; for beta-elimination activity. The DNA site is built by His-104, Arg-127, and Lys-170. An FPG-type zinc finger spans residues 261 to 297 (SVYDREGKPCRKEGCSGTIQRFVQGGRSTFYCPICQR). Arg-287 functions as the Proton donor; for delta-elimination activity in the catalytic mechanism.

This sequence belongs to the FPG family. Monomer. Requires Zn(2+) as cofactor.

It carries out the reaction Hydrolysis of DNA containing ring-opened 7-methylguanine residues, releasing 2,6-diamino-4-hydroxy-5-(N-methyl)formamidopyrimidine.. The catalysed reaction is 2'-deoxyribonucleotide-(2'-deoxyribose 5'-phosphate)-2'-deoxyribonucleotide-DNA = a 3'-end 2'-deoxyribonucleotide-(2,3-dehydro-2,3-deoxyribose 5'-phosphate)-DNA + a 5'-end 5'-phospho-2'-deoxyribonucleoside-DNA + H(+). Functionally, involved in base excision repair of DNA damaged by oxidation or by mutagenic agents. Acts as a DNA glycosylase that recognizes and removes damaged bases. Has a preference for oxidized purines, such as 7,8-dihydro-8-oxoguanine (8-oxoG). Has AP (apurinic/apyrimidinic) lyase activity and introduces nicks in the DNA strand. Cleaves the DNA backbone by beta-delta elimination to generate a single-strand break at the site of the removed base with both 3'- and 5'-phosphates. The sequence is that of Formamidopyrimidine-DNA glycosylase from Chelativorans sp. (strain BNC1).